We begin with the raw amino-acid sequence, 414 residues long: MEFKSGFLNTLQVRGYLHQCTDDVALDELMALQPITAYIGFDCTARSLHIGSLMQIMVMRYLQKFGHKIVVLLGGGTTKIGDPSGKDKARAMLSEAEIAANKAGILATINKFLNQGDGVVIADNAEWLGEVRYLEFLREIGSKFSVNAMLGLDSVRSRLDRDQNLSFLEFSYVLLQSYDFVELHRRHKCVLQIGGADQWGNIVNGIDLGRKLGLPQLYGLTTHLLLTSTGEKMGKTADGAVWLDAEMFDPGNYWQYFRNVADVEVGRLLRLFTELPMNEIAELENLQGEAINEAKKVLATEATAICHGKSAALAAENAALQVFEHNDDAGLPHFPLHKSLIAQGISVAKLLQLAGLEESISAGRRLIKGRGCKINGMVVEDADHALTHADFARNSGYITVFCGKKRRIKVVVED.

An L-tyrosine-binding site is contributed by tyrosine 38. Residues 43-52 carry the 'HIGH' region motif; the sequence is CTARSLHIGS. L-tyrosine is bound by residues tyrosine 172 and glutamine 176. The 'KMSKS' region motif lies at 232-236; that stretch reads KMGKT. Residue lysine 235 participates in ATP binding. Residues 345–412 enclose the S4 RNA-binding domain; sequence ISVAKLLQLA…GKKRRIKVVV (68 aa).

It belongs to the class-I aminoacyl-tRNA synthetase family. TyrS type 1 subfamily. As to quaternary structure, homodimer.

Its subcellular location is the cytoplasm. The enzyme catalyses tRNA(Tyr) + L-tyrosine + ATP = L-tyrosyl-tRNA(Tyr) + AMP + diphosphate + H(+). Its function is as follows. Catalyzes the attachment of tyrosine to tRNA(Tyr) in a two-step reaction: tyrosine is first activated by ATP to form Tyr-AMP and then transferred to the acceptor end of tRNA(Tyr). This Anaplasma marginale (strain St. Maries) protein is Tyrosine--tRNA ligase.